Consider the following 193-residue polypeptide: Probable chorismate pyruvate-lyase (193 aa).

Positions 81, 119, and 177 each coordinate substrate.

The protein belongs to the UbiC family.

It localises to the cytoplasm. The catalysed reaction is chorismate = 4-hydroxybenzoate + pyruvate. Its pathway is cofactor biosynthesis; ubiquinone biosynthesis. Its function is as follows. Removes the pyruvyl group from chorismate, with concomitant aromatization of the ring, to provide 4-hydroxybenzoate (4HB) for the ubiquinone pathway. The protein is Probable chorismate pyruvate-lyase of Idiomarina loihiensis (strain ATCC BAA-735 / DSM 15497 / L2-TR).